A 609-amino-acid polypeptide reads, in one-letter code: 1-deoxy-D-xylulose-5-phosphate synthase (609 aa).

Thiamine diphosphate-binding positions include His-77 and 118 to 120; that span reads GHS. Asp-149 is a binding site for Mg(2+). Thiamine diphosphate is bound by residues 150–151, Asn-178, Tyr-259, and Glu-342; that span reads GA. Asn-178 provides a ligand contact to Mg(2+).

It belongs to the transketolase family. DXPS subfamily. Homodimer. Mg(2+) serves as cofactor. Thiamine diphosphate is required as a cofactor.

The catalysed reaction is D-glyceraldehyde 3-phosphate + pyruvate + H(+) = 1-deoxy-D-xylulose 5-phosphate + CO2. The protein operates within metabolic intermediate biosynthesis; 1-deoxy-D-xylulose 5-phosphate biosynthesis; 1-deoxy-D-xylulose 5-phosphate from D-glyceraldehyde 3-phosphate and pyruvate: step 1/1. Catalyzes the acyloin condensation reaction between C atoms 2 and 3 of pyruvate and glyceraldehyde 3-phosphate to yield 1-deoxy-D-xylulose-5-phosphate (DXP). This Listeria monocytogenes serotype 4b (strain CLIP80459) protein is 1-deoxy-D-xylulose-5-phosphate synthase.